The primary structure comprises 110 residues: Phosphoribosyl-ATP pyrophosphatase (110 aa).

The protein belongs to the PRA-PH family.

It is found in the cytoplasm. The catalysed reaction is 1-(5-phospho-beta-D-ribosyl)-ATP + H2O = 1-(5-phospho-beta-D-ribosyl)-5'-AMP + diphosphate + H(+). Its pathway is amino-acid biosynthesis; L-histidine biosynthesis; L-histidine from 5-phospho-alpha-D-ribose 1-diphosphate: step 2/9. The sequence is that of Phosphoribosyl-ATP pyrophosphatase from Pseudomonas fluorescens (strain ATCC BAA-477 / NRRL B-23932 / Pf-5).